Reading from the N-terminus, the 202-residue chain is Large ribosomal subunit protein bL25 (202 aa).

The protein belongs to the bacterial ribosomal protein bL25 family. CTC subfamily. As to quaternary structure, part of the 50S ribosomal subunit; part of the 5S rRNA/L5/L18/L25 subcomplex. Contacts the 5S rRNA. Binds to the 5S rRNA independently of L5 and L18.

Its function is as follows. This is one of the proteins that binds to the 5S RNA in the ribosome where it forms part of the central protuberance. This is Large ribosomal subunit protein bL25 from Clostridium perfringens (strain ATCC 13124 / DSM 756 / JCM 1290 / NCIMB 6125 / NCTC 8237 / Type A).